The sequence spans 653 residues: Polyadenylate-binding protein, cytoplasmic and nuclear (653 aa).

Residues 1 to 10 (MPSTDLKKQA) show a composition bias toward basic and acidic residues. The tract at residues 1 to 77 (MPSTDLKKQA…SVATPSGTAP (77 aa)) is disordered. Over residues 17 to 27 (DVNTNNEAVES) the composition is skewed to polar residues. Over residues 53 to 68 (AAEPSESTSTPTNASS) the composition is skewed to low complexity. An RRM 1 domain is found at 80–158 (ASLYVGELDP…RPCRIMWSQR (79 aa)). The residue at position 167 (Thr167) is a Phosphothreonine. 3 RRM domains span residues 168 to 245 (GNVF…HHVS), 261 to 338 (TNVY…RAQK), and 364 to 441 (VNLF…LAQR). One can recognise a PABC domain in the interval 569–646 (PERFTAADLA…AIGVLQEFVD (78 aa)).

This sequence belongs to the polyadenylate-binding protein type-1 family. In terms of assembly, interacts with cid13.

The protein localises to the cytoplasm. It localises to the nucleus. Functionally, binds the poly(A) tail of mRNA. Appears to be an important mediator of the multiple roles of the poly(A) tail in mRNA biogenesis, stability and translation. In the nucleus, involved in both mRNA cleavage and polyadenylation. Is also required for efficient mRNA export to the cytoplasm. Acts in concert with a poly(A)-specific nuclease (PAN) to affect poly(A) tail shortening, which may occur concomitantly with either nucleocytoplasmic mRNA transport or translational initiation. In the cytoplasm, stimulates translation initiation and regulates mRNA decay through translation termination-coupled poly(A) shortening, probably mediated by PAN. The chain is Polyadenylate-binding protein, cytoplasmic and nuclear (pab1) from Schizosaccharomyces pombe (strain 972 / ATCC 24843) (Fission yeast).